Here is a 99-residue protein sequence, read N- to C-terminus: NADH-ubiquinone oxidoreductase chain 2 (99 aa).

2 helical membrane passes run 22–42 (FLTF…IQII) and 65–85 (VMIS…SIFI).

It belongs to the complex I subunit 2 family.

It localises to the mitochondrion inner membrane. The enzyme catalyses a ubiquinone + NADH + 5 H(+)(in) = a ubiquinol + NAD(+) + 4 H(+)(out). Its function is as follows. Core subunit of the mitochondrial membrane respiratory chain NADH dehydrogenase (Complex I) that is believed to belong to the minimal assembly required for catalysis. Complex I functions in the transfer of electrons from NADH to the respiratory chain. The immediate electron acceptor for the enzyme is believed to be ubiquinone. The sequence is that of NADH-ubiquinone oxidoreductase chain 2 (ND2) from Cyanidium caldarium (Red alga).